We begin with the raw amino-acid sequence, 295 residues long: Aquaporin-9 (295 aa).

Residues 1–24 (MPSEKDGAKKSLMQRLALKSRIAK) are Cytoplasmic-facing. Residues 25-43 (ETLSEFLGTFIMIVLGCSS) form a helical membrane-spanning segment. Topologically, residues 44 to 57 (IAQAVLSRERFGGI) are extracellular. The helical transmembrane segment at 58–77 (ITINIGFASAVVMALYVTFG) threads the bilayer. Topologically, residues 78 to 79 (IS) are cytoplasmic. The discontinuously helical intramembrane region spans 80 to 92 (GGHINPAVSFAMC). The NPA 1 signature appears at 84-86 (NPA). The Cytoplasmic segment spans residues 93–98 (AFGRME). A helical membrane pass occupies residues 99-123 (WFKFPFYVGAQFLGAFVGAATVFGI). Residues 124-160 (YYDGLMAFAGGKLLVVGENATAFIFATYPAPFISTPG) are Extracellular-facing. The helical transmembrane segment at 161-178 (AFVDQVVSTMFLLLIVFA) threads the bilayer. Topologically, residues 179 to 190 (MFDSRNLGVPRG) are cytoplasmic. Residues 191–207 (LEPVVIGLLIIVLSCSL) traverse the membrane as a helical segment. Residues 208-210 (GLN) lie on the Extracellular side of the membrane. Residues 211 to 225 (SGCAMNPARDLSPRL) constitute an intramembrane region (discontinuously helical). Positions 216 to 218 (NPA) match the NPA 2 motif. Residues 226 to 243 (FTALAGWGFEVFTVGNNF) are Extracellular-facing. The helical transmembrane segment at 244 to 264 (WWIPVVGPMIGAFLGGLIYIL) threads the bilayer. Over 265-295 (FIQMHHSKLDPDMKAEPSENNLEKHELSVIM) the chain is Cytoplasmic.

Belongs to the MIP/aquaporin (TC 1.A.8) family. As to quaternary structure, homotetramer; each monomer provides an independent glycerol/water pore. As to expression, detected in testis and liver. Detected in immature spermatocytes and in interstitial Leydig cells.

Its subcellular location is the cell membrane. It is found in the basolateral cell membrane. The catalysed reaction is H2O(in) = H2O(out). The enzyme catalyses glycerol(in) = glycerol(out). It catalyses the reaction urea(in) = urea(out). It carries out the reaction (S)-lactate(in) = (S)-lactate(out). The catalysed reaction is NH4(+)(in) = NH4(+)(out). The enzyme catalyses uracil(in) = uracil(out). It catalyses the reaction adenine(out) = adenine(in). It carries out the reaction 3-hydroxybutanoate(in) = 3-hydroxybutanoate(out). The catalysed reaction is D-sorbitol(in) = D-sorbitol(out). The enzyme catalyses D-mannitol(in) = D-mannitol(out). It catalyses the reaction H2O2(out) = H2O2(in). It carries out the reaction arsenite(in) = arsenite(out). The catalysed reaction is selenite(in) = selenite(out). Its activity is regulated as follows. Channel activity is inhibited by mercury ions and phloretin. Functionally, aquaglyceroporins form homotetrameric transmembrane channels, with each monomer independently mediating glycerol and water transport across the plasma membrane along their osmotic gradient. AQP9 is the primary route for glycerol uptake in hepatocytes, supporting hepatic gluconeogenesis. It exhibits broad specificity and may transport various small, non-charged solutes, including carbamides, polyols, purines, and pyrimidines. AQP9 may also facilitate hepatic urea extrusion. Due to its permeability to lactate, AQP9 might participate in the astrocyte-to-neuron lactate shuttle, supplying neurons with energy. Additionally, AQP9 is permeable to arsenite, contributing to arsenic excretion by the liver and providing partial protection against arsenic toxicity. It is also permeable to H2O2 in vivo. Could also be permeable to ammonium. This chain is Aquaporin-9, found in Rattus norvegicus (Rat).